Reading from the N-terminus, the 602-residue chain is Elongation factor 4 (602 aa).

Residues 2 to 184 (KHIRNFSIIA…AIVAKVPAPR (183 aa)) enclose the tr-type G domain. Residues 14–19 (DHGKST) and 131–134 (NKMD) contribute to the GTP site.

It belongs to the TRAFAC class translation factor GTPase superfamily. Classic translation factor GTPase family. LepA subfamily.

Its subcellular location is the cell inner membrane. The enzyme catalyses GTP + H2O = GDP + phosphate + H(+). Its function is as follows. Required for accurate and efficient protein synthesis under certain stress conditions. May act as a fidelity factor of the translation reaction, by catalyzing a one-codon backward translocation of tRNAs on improperly translocated ribosomes. Back-translocation proceeds from a post-translocation (POST) complex to a pre-translocation (PRE) complex, thus giving elongation factor G a second chance to translocate the tRNAs correctly. Binds to ribosomes in a GTP-dependent manner. This chain is Elongation factor 4, found in Verminephrobacter eiseniae (strain EF01-2).